The following is a 238-amino-acid chain: MAQVSMRDMLNAGVHYGHQTRYWNPKMKPFIFGARNGVHVINLEKTLPLFNEALAELTRISSNNGKILFVGTKRAASEAVKAAAVDCQQFYVNHRWLGGMLTNWKTVRQSIKRLKDLETQTQDGTFDKITKKEALMRTRELETLELSLGGIKDMAGLPDAIFVIGADHEHIAIKEANNLGIPVFAIVDTNSTPDGVNYIIPGNDDATRAIQLYLDAAAAAVKEGRGSNVEAELEATAE.

The protein belongs to the universal ribosomal protein uS2 family.

The chain is Small ribosomal subunit protein uS2 from Actinobacillus pleuropneumoniae serotype 5b (strain L20).